Consider the following 1167-residue polypeptide: Integrin alpha-10 (1167 aa).

A signal peptide spans 1 to 22; the sequence is MELPFVTHLFLPLVFLTGLCSP. The Extracellular portion of the chain corresponds to 23-1122; the sequence is FNLDEHHPRL…VVQTRPILIS (1100 aa). FG-GAP repeat units lie at residues 24–85 and 95–154; these read NLDE…HNAP and QLGN…PQGS. C76 and C86 are joined by a disulfide. N-linked (GlcNAc...) asparagine glycosylation is found at N98, N234, N336, and N364. The 184-residue stretch at 167-350 folds into the VWFA domain; it reads DVVIVLDGSN…AALTDIVDAL (184 aa). FG-GAP repeat units follow at residues 361–412, 417–470, 472–534, 535–593, and 597–657; these read HAEN…LFPP, EDEF…KDGA, RVAQ…SLLT, LQGT…GVRP, and QRIA…VTPQ. Ca(2+)-binding residues include D494, D496, D498, D502, D558, N560, D562, D566, D620, D622, D624, and D628. Disulfide bonds link C666–C675 and C681–C736. N-linked (GlcNAc...) asparagine glycosylation is found at N733 and N763. Residues C789 and C795 are joined by a disulfide bond. N-linked (GlcNAc...) asparagine glycans are attached at residues N839, N921, N1011, N1018, and N1039. The chain crosses the membrane as a helical span at residues 1123–1145; the sequence is LWILIGSVLGGLLLLALLVFCLW. The Cytoplasmic portion of the chain corresponds to 1146 to 1167; that stretch reads KLGFFAHKKIPEEEKREEKLEQ.

This sequence belongs to the integrin alpha chain family. In terms of assembly, heterodimer of an alpha and a beta subunit. Alpha-10 associates with beta-1. Widely expressed with highest expression in muscle and heart. Found in articular cartilage.

The protein localises to the membrane. In terms of biological role, integrin alpha-10/beta-1 is a receptor for collagen. This is Integrin alpha-10 (ITGA10) from Homo sapiens (Human).